Here is a 367-residue protein sequence, read N- to C-terminus: Voltage-gated potassium channel subunit beta-2 (367 aa).

Phosphoserine occurs at positions 9, 14, and 20. Position 28 is an asymmetric dimethylarginine; alternate (arginine 28). Arginine 28 is subject to Omega-N-methylarginine; alternate. Serine 31 carries the phosphoserine modification. Residues threonine 56, tryptophan 57, glutamine 63, and aspartate 85 each coordinate NADP(+). The active-site Proton donor/acceptor is the tyrosine 90. Phosphoserine is present on serine 112. Residue lysine 124 is modified to N6-acetyllysine. 18 residues coordinate NADP(+): asparagine 158, serine 188, arginine 189, glutamine 214, tryptophan 243, serine 244, proline 245, leucine 246, alanine 247, cysteine 248, lysine 254, tyrosine 262, arginine 264, glycine 323, serine 325, glutamine 329, glutamate 332, and asparagine 333.

It belongs to the shaker potassium channel beta subunit family. In terms of assembly, homotetramer. Interaction with tetrameric potassium channel alpha subunits gives rise to a heterooctamer. Identified in potassium channel complexes containing KCNA1, KCNA2, KCNA4, KCNA5, KCNA6, KCNAB1, KCNAB2 and KCND3. Interacts (in unphosphorylated form) with MAPRE1. Forms a ternary complex with SQSTM1 and PRKCZ. Post-translationally, phosphorylated by PRKCZ; may be regulated by incorporation in a complex composed of PRKCZ and SQSTM1. As to expression, detected in the juxtaparanodal region of nodes of Ranvier in myelinated nerve fibers in the spinal cord (at protein level).

Its subcellular location is the cytoplasm. It localises to the membrane. It is found in the cell membrane. The protein resides in the cell projection. The protein localises to the axon. Its subcellular location is the synapse. It localises to the synaptosome. It is found in the cytoskeleton. It carries out the reaction hydroxyacetone + NADP(+) = methylglyoxal + NADPH + H(+). The enzyme catalyses (E)-4-oxonon-2-en-1-ol + NADP(+) = (E)-4-oxonon-2-enal + NADPH + H(+). Regulatory subunit of the voltage-gated potassium (Kv) Shaker channels composed of pore-forming and potassium-conducting alpha subunits and of regulatory beta subunits. The beta-2/KCNAB2 cytoplasmic subunit promotes potassium channel closure via a mechanism that does not involve physical obstruction of the channel pore. Promotes the inactivation of Kv1.4/KCNA4 and Kv1.5/KCNA5 alpha subunit-containing channels. Displays nicotinamide adenine dinucleotide phosphate (NADPH)-dependent aldoketoreductase activity by catalyzing the NADPH-dependent reduction of a wide range of aldehyde and ketone substrates. Substrate specificity includes methylglyoxal, 9,10-phenanthrenequinone, prostaglandin J2, 4-nitrobenzaldehyde, 4-nitroacetophenone and 4-oxo-trans-2-nonenal (in vitro, no physiological substrate identified yet). The binding of oxidized and reduced nucleotide alters Kv channel gating and may contribute to dynamic fine tuning of cell excitability. Contributes to the regulation of nerve signaling, and prevents neuronal hyperexcitability. The sequence is that of Voltage-gated potassium channel subunit beta-2 (KCNAB2) from Bos taurus (Bovine).